Consider the following 297-residue polypeptide: uncharacterized protein (297 aa).

Helical transmembrane passes span phenylalanine 26–isoleucine 48, asparagine 80–phenylalanine 102, leucine 134–glycine 156, leucine 185–isoleucine 205, leucine 225–tyrosine 247, and leucine 262–tyrosine 284.

It is found in the cell membrane. This is an uncharacterized protein from Archaeoglobus fulgidus (strain ATCC 49558 / DSM 4304 / JCM 9628 / NBRC 100126 / VC-16).